The following is a 397-amino-acid chain: uncharacterized protein (397 aa).

9 consecutive transmembrane segments (helical) span residues 1 to 21, 39 to 59, 76 to 96, 103 to 123, 124 to 144, 194 to 214, 219 to 239, 255 to 275, and 301 to 321; these read MGAS…LMLV, VIQS…VVVF, EALS…FGVP, VLLF…FVGA, ALIE…LVMA, MMTP…LFAF, ALFG…FSLL, LVYL…KLML, and QSLT…FWSA.

It belongs to the TerC family.

It is found in the cell membrane. This is an uncharacterized protein from Mycobacterium tuberculosis (strain CDC 1551 / Oshkosh).